Reading from the N-terminus, the 628-residue chain is Nuclear receptor subfamily 4 group A member 3 (628 aa).

The tract at residues 1 to 112 (MPCVQAQYSP…HHHHHHHHHH (112 aa)) is activation function (AF)-1 domain. The required for DNA-PK heterotrimer stretch occupies residues 1-140 (MPCVQAQYSP…PSTSMYFKQS (140 aa)). The interval 1–293 (MPCVQAQYSP…NRSSSSGEGT (293 aa)) is interaction with NCOA1, NCOA2, NCOA3 and KAT2B. Disordered stretches follow at residues 96–163 (HGYH…DELP) and 269–290 (ASSLLGESPSLPSPPNRSSSSG). A compositionally biased stretch (basic residues) spans 97–113 (GYHHHHHHHHHHHHHHQ). Pro residues predominate over residues 142-151 (PSTPTTPGFP). Positions 270–289 (SSLLGESPSLPSPPNRSSSS) are enriched in low complexity. Positions 291-366 (EGTCAVCGDN…VGMVKEVVRT (76 aa)) form a DNA-binding region, nuclear receptor. NR C4-type zinc fingers lie at residues 294–314 (CAVCGDNAACQHYGVRTCEGC) and 330–354 (CLANKNCPVDKRRRNRCQYCRFQKC). The segment at 366-396 (TDSLKGRRGRLPSKPKSPLQQEPSQPSPPSP) is disordered. Low complexity predominate over residues 379–389 (KPKSPLQQEPS). Residues 381–628 (KSPLQQEPSQ…DKLFLDTLPF (248 aa)) are interaction with KAT2B. One can recognise an NR LBD domain in the interval 396-625 (PPICMMNALV…SVIDKLFLDT (230 aa)).

This sequence belongs to the nuclear hormone receptor family. NR4 subfamily. In terms of assembly, interacts with SIX3 (via homeobox); differentially regulates the transcriptional activities of NR4A3. Interacts with NR3C1 (via nuclear receptor DNA-binding domain); the interactions represses transcription activity of NR4A3 on the POMC promoter Nur response element (NurRE). Interacts with TRIM28; the interactions potentiates NR4A3 activity on NurRE promoter. Binds DNA as a monomer and homodimer. Interacts with PARP1; activates PARP1 by improving acetylation of PARP1 and suppressing the interaction between PARP1 and SIRT1. Interacts with the constituents of DNA-PK heterotrimer PRKDC, XRCC6 and XRCC5; phosphorylates and prevents NR4A3 ubiquitinylation and degradation. Interacts with NCOA2; potentiates the activity of the NR4A3. Interacts with NCOA1, NCOA3, MED1 and KAT2B. Interacts with EP300 and NCOA2; mediates the recruitment of MED1 in the coactivator complex. Post-translationally, phosphorylated by PRKDC. As to expression, expressed at high levels in cultured apoptotic neuronal cells and fetal brain, and at low level in adult brain.

Its subcellular location is the nucleus. Transcriptional activator that binds to regulatory elements in promoter regions in a cell- and response element (target)-specific manner. Induces gene expression by binding as monomers to the NR4A1 response element (NBRE) 5'-AAAAGGTCA-3' site and as homodimers to the Nur response element (NurRE) site in the promoter of their regulated target genes. Plays a role in the regulation of proliferation, survival and differentiation of many different cell types and also in metabolism and inflammation. Mediates proliferation of vascular smooth muscle, myeloid progenitor cell and type B pancreatic cells; promotes mitogen-induced vascular smooth muscle cell proliferation through transactivation of SKP2 promoter by binding a NBRE site. Upon PDGF stimulation, stimulates vascular smooth muscle cell proliferation by regulating CCND1 and CCND2 expression. In islets, induces type B pancreatic cell proliferation through up-regulation of genes that activate cell cycle, as well as genes that cause degradation of the CDKN1A. Negatively regulates myeloid progenitor cell proliferation by repressing RUNX1 in a NBRE site-independent manner. During inner ear, plays a role as a key mediator of the proliferative growth phase of semicircular canal development. Also mediates survival of neuron and smooth muscle cells; mediates CREB-induced neuronal survival, and during hippocampus development, plays a critical role in pyramidal cell survival and axonal guidance. Is required for S phase entry of the cell cycle and survival of smooth muscle cells by inducing CCND1, resulting in RB1 phosphorylation. Binds to NBRE motif in CCND1 promoter, resulting in the activation of the promoter and CCND1 transcription. Also plays a role in inflammation; Upon TNF stimulation, mediates monocyte adhesion by inducing the expression of VCAM1 and ICAM1 by binding to the NBRE consensus site. In mast cells activated by Fc-epsilon receptor cross-linking, promotes the synthesis and release of cytokines but impairs events leading to degranulation. Also plays a role in metabolism; by modulating feeding behavior; and by playing a role in energy balance by inhibiting the glucocorticoid-induced orexigenic neuropeptides AGRP expression, at least in part by forming a complex with activated NR3C1 on the AGRP-glucocorticoid response element (GRE), and thus weakening the DNA binding activity of NR3C1. Upon catecholamines stimulation, regulates gene expression that controls oxidative metabolism in skeletal muscle. Plays a role in glucose transport by regulating translocation of the SLC2A4 glucose transporter to the cell surface. Finally, during gastrulation plays a crucial role in the formation of anterior mesoderm by controlling cell migration. Also participates in cardiac hypertrophy by activating PARP1. In Rattus norvegicus (Rat), this protein is Nuclear receptor subfamily 4 group A member 3 (Nr4a3).